The sequence spans 519 residues: MTEPLLTMRGIVKAFDGVKALDGIDLTVRPGECVGLCGENGAGKSTLMKVLSGVYPHGTWDGEIRWEGAPLVASGVRDTERAGIVIIHQELMLVPELSVAENIFLGNEITLPGGRMHYAEMVRRSEALLRDLRIDAINVAQPVMNYGGGHQQLIEIAKALNKRAKLLILDEPSSSLSAAETRILLDIVRDLKRRGVACVYISHKLDEVDAVCDTVTVIRDGRHVATEPMSTLTTDRIIAMMVGREIRNLYPREPHEIGDVVLEARNVTCHDVANPRRKRVDDVSFAVRRGEILGVAGLVGAGRTELMQAIFGAYPGASTASIRMNGRPLAIRAPADAIRAGIAMVPEDRKRHGIVPQLGVGHNITLSVLRRFATRGRIDAAAELDAIRTEMQRLSVRAAHPFLPIASLSGGNQQKAVLARMLLADPQVLILDEPTRGVDVGAKAEIYRLIFALAKRGVALIVVSSELPEVLGLADRVLVIGEGELRGDFVNDGLTQEQILGAALTPARRPAEPIAASNP.

ABC transporter domains lie at 6–245 (LTMR…VGRE) and 262–507 (LEAR…LTPA). 38 to 45 (GENGAGKS) is a binding site for ATP.

Belongs to the ABC transporter superfamily. Xylose importer (TC 3.A.1.2.4) family. In terms of assembly, the complex is composed of two ATP-binding proteins (XylG), two transmembrane proteins (XylH) and a solute-binding protein (XylF).

It localises to the cell inner membrane. It carries out the reaction D-xylose(out) + ATP + H2O = D-xylose(in) + ADP + phosphate + H(+). Functionally, part of the ABC transporter complex XylFGH involved in xylose import. Responsible for energy coupling to the transport system. This chain is Xylose import ATP-binding protein XylG, found in Burkholderia ambifaria (strain ATCC BAA-244 / DSM 16087 / CCUG 44356 / LMG 19182 / AMMD) (Burkholderia cepacia (strain AMMD)).